Here is a 124-residue protein sequence, read N- to C-terminus: Small ribosomal subunit protein uS12 (124 aa).

The tract at residues 1–26 (MPTISQLVGSERKRLTKKTKSPALKA) is disordered. Position 89 is a 3-methylthioaspartic acid (Asp-89). The interval 104–124 (TAGVKDRRQSRSKYGAKAPKD) is disordered.

The protein belongs to the universal ribosomal protein uS12 family. As to quaternary structure, part of the 30S ribosomal subunit. Contacts proteins S8 and S17. May interact with IF1 in the 30S initiation complex.

In terms of biological role, with S4 and S5 plays an important role in translational accuracy. Functionally, interacts with and stabilizes bases of the 16S rRNA that are involved in tRNA selection in the A site and with the mRNA backbone. Located at the interface of the 30S and 50S subunits, it traverses the body of the 30S subunit contacting proteins on the other side and probably holding the rRNA structure together. The combined cluster of proteins S8, S12 and S17 appears to hold together the shoulder and platform of the 30S subunit. This Prochlorococcus marinus (strain MIT 9215) protein is Small ribosomal subunit protein uS12.